Consider the following 191-residue polypeptide: Potassium-transporting ATPase KdpC subunit (191 aa).

The helical transmembrane segment at 8 to 28 (LFLFLLLLLVTGLAYPLLTTV) threads the bilayer.

Belongs to the KdpC family. As to quaternary structure, the system is composed of three essential subunits: KdpA, KdpB and KdpC.

The protein localises to the cell inner membrane. Functionally, part of the high-affinity ATP-driven potassium transport (or Kdp) system, which catalyzes the hydrolysis of ATP coupled with the electrogenic transport of potassium into the cytoplasm. This subunit acts as a catalytic chaperone that increases the ATP-binding affinity of the ATP-hydrolyzing subunit KdpB by the formation of a transient KdpB/KdpC/ATP ternary complex. The polypeptide is Potassium-transporting ATPase KdpC subunit (Pectobacterium atrosepticum (strain SCRI 1043 / ATCC BAA-672) (Erwinia carotovora subsp. atroseptica)).